A 662-amino-acid polypeptide reads, in one-letter code: Methyl-accepting chemotaxis protein TlpA (662 aa).

The Cytoplasmic segment spans residues 1–16 (MKKTLTTIRRSSIARR). The helical transmembrane segment at 17–37 (LIISFLLILIVPITALSVSAY) threads the bilayer. Topologically, residues 38–281 (QSAVASLDVQ…IHDAASRVLI (244 aa)) are extracellular. Residues 152–228 (VTEPYESISS…KAGTELKGDW (77 aa)) enclose the Cache domain. Residues 282–302 (MASIVLAIAIGAGMTAIYFVI) form a helical membrane-spanning segment. The HAMP domain occupies 303–355 (RSITKPLRRIVASAEKISEGDLTETIEINSKDELGVLSESFNHMAHSLRSLIH). Residues 303-662 (RSITKPLRRI…DLTKQFKVDK (360 aa)) lie on the Cytoplasmic side of the membrane. 4 positions are modified to glutamate methyl ester (Glu): glutamate 370, glutamate 594, glutamate 629, and glutamate 636. The region spanning 374 to 610 (SADQTSRATE…EISAASNDIT (237 aa)) is the Methyl-accepting transducer domain.

This sequence belongs to the methyl-accepting chemotaxis (MCP) protein family. Interacts with YabA.

It localises to the cell membrane. Chemotactic-signal transducers respond to changes in the concentration of attractants and repellents in the environment, transduce a signal from the outside to the inside of the cell, and facilitate sensory adaptation through the variation of the level of methylation. All amino acids serve as attractants in B.subtilis, they appear to cause an increase in the turnover methyl groups, leading to methylation of an unidentified acceptor, while repellents have been shown to cause a decrease in methyl group turnover. The methyl groups are added by a methyltransferase and removed by a methylesterase. The sequence is that of Methyl-accepting chemotaxis protein TlpA from Bacillus subtilis (strain 168).